The following is a 421-amino-acid chain: MNTLQRRKTHQVRIDHITVGSEAPVVIQSMTNTDTADAKATALQIKELSDAGSEMVRITVNSPEAASKVAEIRRRLDDMGYATPLIGDFHFNGERLLAEFPECGKALSKYRINPGNVGKGVKGDEKFAFMIRTAAENDKAVRIGVNWGSLDQSLAKRMMDANLASSAPKPPEEVTKEALIVSALESAEKAVLLGLPEDKIILSCKVSAVQDLIQVYRELGSRCAYPLHLGLTEAGMGSKGIVASTAALSVLLQEGIGDTIRISLTPEPGSPRTQEVVVGQEILQTMGLRSFTPMVTACPGCGRTTSTVFQELAQDVQNYLRQKMSIWRTLYPGVESLNVAVMGCVVNGPGESKLADIGISLPGTGETPVAPVYVDGERKITLKGDNIATEFLAIVEEYVKTNYGENGSKRNQNKIIPIQSL.

The [4Fe-4S] cluster site is built by cysteine 298, cysteine 301, cysteine 344, and glutamate 351.

It belongs to the IspG family. The cofactor is [4Fe-4S] cluster.

The catalysed reaction is (2E)-4-hydroxy-3-methylbut-2-enyl diphosphate + oxidized [flavodoxin] + H2O + 2 H(+) = 2-C-methyl-D-erythritol 2,4-cyclic diphosphate + reduced [flavodoxin]. The protein operates within isoprenoid biosynthesis; isopentenyl diphosphate biosynthesis via DXP pathway; isopentenyl diphosphate from 1-deoxy-D-xylulose 5-phosphate: step 5/6. Functionally, converts 2C-methyl-D-erythritol 2,4-cyclodiphosphate (ME-2,4cPP) into 1-hydroxy-2-methyl-2-(E)-butenyl 4-diphosphate. The sequence is that of 4-hydroxy-3-methylbut-2-en-1-yl diphosphate synthase (flavodoxin) from Neisseria meningitidis serogroup C / serotype 2a (strain ATCC 700532 / DSM 15464 / FAM18).